The following is a 77-amino-acid chain: Large ribosomal subunit protein uL29 (77 aa).

It belongs to the universal ribosomal protein uL29 family.

The protein is Large ribosomal subunit protein uL29 (rpmC) of Mycobacterium bovis (strain ATCC BAA-935 / AF2122/97).